A 399-amino-acid chain; its full sequence is Digeranylgeranylglycerophospholipid reductase (399 aa).

Residues glycine 15, glutamate 34, cysteine 45, alanine 46, glycine 48, arginine 99, alanine 123, aspartate 280, glycine 292, and isoleucine 293 each coordinate FAD.

Belongs to the geranylgeranyl reductase family. DGGGPL reductase subfamily. It depends on FAD as a cofactor.

The enzyme catalyses a 2,3-bis-O-phytanyl-sn-glycerol 1-phospholipid + 8 oxidized 2[4Fe-4S]-[ferredoxin] = a 2,3-bis-O-(geranylgeranyl)-sn-glycerol 1-phospholipid + 8 reduced 2[4Fe-4S]-[ferredoxin] + 16 H(+). It carries out the reaction 2,3-bis-O-(phytanyl)-sn-glycerol 1-phosphate + 8 oxidized 2[4Fe-4S]-[ferredoxin] = 2,3-bis-O-(geranylgeranyl)-sn-glycerol 1-phosphate + 8 reduced 2[4Fe-4S]-[ferredoxin] + 16 H(+). It catalyses the reaction a 2,3-bis-O-phytanyl-sn-glycerol 1-phospholipid + 8 A = a 2,3-bis-O-(geranylgeranyl)-sn-glycerol 1-phospholipid + 8 AH2. The catalysed reaction is CDP-2,3-bis-O-(geranylgeranyl)-sn-glycerol + 8 AH2 = CDP-2,3-bis-O-(phytanyl)-sn-glycerol + 8 A. The enzyme catalyses archaetidylserine + 8 AH2 = 2,3-bis-O-phytanyl-sn-glycero-3-phospho-L-serine + 8 A. Its pathway is membrane lipid metabolism; glycerophospholipid metabolism. Its function is as follows. Is involved in the reduction of 2,3-digeranylgeranylglycerophospholipids (unsaturated archaeols) into 2,3-diphytanylglycerophospholipids (saturated archaeols) in the biosynthesis of archaeal membrane lipids. Catalyzes the formation of archaetidic acid (2,3-di-O-phytanyl-sn-glyceryl phosphate) from 2,3-di-O-geranylgeranylglyceryl phosphate (DGGGP) via the hydrogenation of each double bond of the isoprenoid chains. Is also probably able to reduce double bonds of geranyl groups in CDP-2,3-bis-O-(geranylgeranyl)-sn-glycerol and archaetidylserine, thus acting at various stages in the biosynthesis of archaeal membrane lipids. This chain is Digeranylgeranylglycerophospholipid reductase, found in Methanosphaerula palustris (strain ATCC BAA-1556 / DSM 19958 / E1-9c).